The sequence spans 156 residues: MPRKGPVSKRSVLPDPKFGSHLMTKFINRLMHDGKKGVAENLFYQAVEVLAEKSGEDPLKAFEKAIGNVKPHMEVKPRRVGGATYQVPMEVRPERQVTLALRWLINQARARGEKGMADKLSGELLDAYHNRGGAVKKKEDTHRMADANKAFAHYRW.

The protein belongs to the universal ribosomal protein uS7 family. As to quaternary structure, part of the 30S ribosomal subunit. Contacts proteins S9 and S11.

Functionally, one of the primary rRNA binding proteins, it binds directly to 16S rRNA where it nucleates assembly of the head domain of the 30S subunit. Is located at the subunit interface close to the decoding center, probably blocks exit of the E-site tRNA. The chain is Small ribosomal subunit protein uS7 from Solidesulfovibrio magneticus (strain ATCC 700980 / DSM 13731 / RS-1) (Desulfovibrio magneticus).